Reading from the N-terminus, the 884-residue chain is Probable leucine-rich repeat receptor-like protein kinase At2g28990 (884 aa).

The signal sequence occupies residues 1 to 19 (MKIHLLLAMIGTFVVIIGA). At 20–508 (QDQEGFISLD…TEKKNKFLLP (489 aa)) the chain is on the extracellular side. Asn-70, Asn-177, Asn-217, Asn-231, Asn-251, Asn-284, Asn-298, Asn-334, Asn-418, Asn-427, Asn-438, Asn-459, and Asn-464 each carry an N-linked (GlcNAc...) asparagine glycan. LRR repeat units follow at residues 404 to 427 (SPTIISLDLSKSGLNGSIPQILQN), 428 to 451 (FTQLQELDLSNNSLTGPVPIFLAN), and 452 to 476 (MKTLSLINLSGNNLSGSVPQALLDK). The helical transmembrane segment at 509–529 (VIASAASLVIVVVVVALFFVF) threads the bilayer. The Cytoplasmic portion of the chain corresponds to 530 to 884 (RKKKASPSNL…IYNEVIPQAR (355 aa)). Residues 535-559 (SPSNLHAPPSMPVSNPGHNSQSESS) are disordered. The span at 546 to 559 (PVSNPGHNSQSESS) shows a compositional bias: polar residues. At Thr-568 the chain carries Phosphothreonine. The region spanning 577–850 (NNFDKALGEG…RVVNELKECL (274 aa)) is the Protein kinase domain. Residues 583–591 (LGEGGFGVV) and Lys-605 contribute to the ATP site. A Phosphotyrosine modification is found at Tyr-650. The active-site Proton acceptor is Asp-702. A Phosphoserine modification is found at Ser-736. Phosphothreonine is present on residues Thr-737 and Thr-742. At Tyr-750 the chain carries Phosphotyrosine.

Belongs to the protein kinase superfamily. Ser/Thr protein kinase family. As to quaternary structure, binds to the ammonium transporter AMT1-1.

It localises to the membrane. It catalyses the reaction L-seryl-[protein] + ATP = O-phospho-L-seryl-[protein] + ADP + H(+). The catalysed reaction is L-threonyl-[protein] + ATP = O-phospho-L-threonyl-[protein] + ADP + H(+). This Arabidopsis thaliana (Mouse-ear cress) protein is Probable leucine-rich repeat receptor-like protein kinase At2g28990.